The chain runs to 216 residues: Molybdenum cofactor guanylyltransferase (216 aa).

GTP contacts are provided by residues 16-18 (LAG), Lys-28, Asn-57, Asp-73, and Asp-108. Asp-108 contacts Mg(2+).

This sequence belongs to the MobA family. Monomer. Mg(2+) is required as a cofactor.

The protein resides in the cytoplasm. The enzyme catalyses Mo-molybdopterin + GTP + H(+) = Mo-molybdopterin guanine dinucleotide + diphosphate. Its function is as follows. Transfers a GMP moiety from GTP to Mo-molybdopterin (Mo-MPT) cofactor (Moco or molybdenum cofactor) to form Mo-molybdopterin guanine dinucleotide (Mo-MGD) cofactor. The sequence is that of Molybdenum cofactor guanylyltransferase from Rhizobium rhizogenes (strain K84 / ATCC BAA-868) (Agrobacterium radiobacter).